The sequence spans 142 residues: Large ribosomal subunit protein uL13 (142 aa).

It belongs to the universal ribosomal protein uL13 family. In terms of assembly, part of the 50S ribosomal subunit.

In terms of biological role, this protein is one of the early assembly proteins of the 50S ribosomal subunit, although it is not seen to bind rRNA by itself. It is important during the early stages of 50S assembly. The polypeptide is Large ribosomal subunit protein uL13 (Francisella tularensis subsp. mediasiatica (strain FSC147)).